The primary structure comprises 215 residues: Chaperone protein TorD (215 aa).

Belongs to the TorD/DmsD family. TorD subfamily.

Its subcellular location is the cytoplasm. In terms of biological role, involved in the biogenesis of TorA. Acts on TorA before the insertion of the molybdenum cofactor and, as a result, probably favors a conformation of the apoenzyme that is competent for acquiring the cofactor. This Shewanella piezotolerans (strain WP3 / JCM 13877) protein is Chaperone protein TorD.